A 798-amino-acid chain; its full sequence is Galactinol--sucrose galactosyltransferase (798 aa).

This sequence belongs to the glycosyl hydrolases 36 family.

It catalyses the reaction alpha-D-galactosyl-(1-&gt;3)-1D-myo-inositol + sucrose = raffinose + myo-inositol. Inhibited by 1-deoxygalactonojirimycin. Not inhibited by stachyose. Strong inhibition of the hydrolytic activity by sucrose. In terms of biological role, transglycosidase operating by a ping-pong reaction mechanism. Involved in the synthesis of raffinose, a major soluble carbohydrate in seeds, roots and tubers. Able to utilize D-ononitol and D-pinitol as acceptors. May also act as a glycoside hydrolase. This is Galactinol--sucrose galactosyltransferase (RFS) from Pisum sativum (Garden pea).